The chain runs to 186 residues: Quinone reductase (186 aa).

FMN is bound by residues serine 13 to asparagine 20, glutamate 80 to arginine 83, and serine 116.

Belongs to the SsuE family. Homotetramer. Dimer of dimers. The tetrameric configuration has a central role in chromate reductase activity. The cofactor is FMN.

The enzyme catalyses a quinone + NADH + H(+) = a quinol + NAD(+). The catalysed reaction is a quinone + NADPH + H(+) = a quinol + NADP(+). It carries out the reaction Cr(6+) + 2 NADH + O2 = Cr(3+) + superoxide + 2 NAD(+) + 2 H(+). It catalyses the reaction Cr(6+) + 2 NADPH + O2 = Cr(3+) + superoxide + 2 NADP(+) + 2 H(+). With respect to regulation, may be inhibited by divalent cations. Catalyzes the reduction of quinones. Acts by simultaneous two-electron transfer, avoiding formation of highly reactive semiquinone intermediates and producing quinols that promote tolerance of H(2)O(2). Quinone reduction is probably the primary biological role of ChrR. Can also reduce toxic chromate to insoluble and less toxic Cr(3+). Catalyzes the transfer of three electrons to Cr(6+) producing Cr(3+) and one electron to molecular oxygen. This reaction produces transiently a minimal amount of the toxic Cr(5+) species and reactive oxygen species (ROS). Chromate reduction protects the cell against chromate toxicity, but is likely a secondary activity. Can also reduce potassium ferricyanide and 2,6-dichloroindophenol. During chromate reduction, displays an eightfold preference for NADH over NADPH. This Pseudomonas putida (strain ATCC 47054 / DSM 6125 / CFBP 8728 / NCIMB 11950 / KT2440) protein is Quinone reductase.